Here is a 212-residue protein sequence, read N- to C-terminus: Holliday junction branch migration complex subunit RuvA (212 aa).

The interval 1 to 66 is domain I; that stretch reads MISGLKGTLK…ERGQKLFGFL (66 aa). The domain II stretch occupies residues 67 to 145; that stretch reads TEQDKEFFKV…KLELFLSGTS (79 aa). Residues 146 to 162 form a flexible linker region; it reads KEPSISLSSFSETPEEA. The tract at residues 163–212 is domain III; that stretch reads ALSRKREIAILGLVQLGFEEKTASKEVDKILKSSSPTDPGEIIREILKSL.

Belongs to the RuvA family. In terms of assembly, homotetramer. Forms an RuvA(8)-RuvB(12)-Holliday junction (HJ) complex. HJ DNA is sandwiched between 2 RuvA tetramers; dsDNA enters through RuvA and exits via RuvB. An RuvB hexamer assembles on each DNA strand where it exits the tetramer. Each RuvB hexamer is contacted by two RuvA subunits (via domain III) on 2 adjacent RuvB subunits; this complex drives branch migration. In the full resolvosome a probable DNA-RuvA(4)-RuvB(12)-RuvC(2) complex forms which resolves the HJ.

Its subcellular location is the cytoplasm. In terms of biological role, the RuvA-RuvB-RuvC complex processes Holliday junction (HJ) DNA during genetic recombination and DNA repair, while the RuvA-RuvB complex plays an important role in the rescue of blocked DNA replication forks via replication fork reversal (RFR). RuvA specifically binds to HJ cruciform DNA, conferring on it an open structure. The RuvB hexamer acts as an ATP-dependent pump, pulling dsDNA into and through the RuvAB complex. HJ branch migration allows RuvC to scan DNA until it finds its consensus sequence, where it cleaves and resolves the cruciform DNA. This chain is Holliday junction branch migration complex subunit RuvA, found in Leptospira borgpetersenii serovar Hardjo-bovis (strain JB197).